Reading from the N-terminus, the 561-residue chain is Carboxylesterase patB (561 aa).

The N-terminal stretch at 1–19 is a signal peptide; the sequence is MQIINWASLLLVTWETVVA. 3 N-linked (GlcNAc...) asparagine glycosylation sites follow: Asn-38, Asn-69, and Asn-109. Residue Ser-263 is the Acyl-ester intermediate of the active site. Ser-263 contributes to the substrate binding site. N-linked (GlcNAc...) asparagine glycosylation is present at Asn-316. The active-site Charge relay system is Glu-385. 4 N-linked (GlcNAc...) asparagine glycosylation sites follow: Asn-393, Asn-412, Asn-429, and Asn-496.

Belongs to the type-B carboxylesterase/lipase family.

It is found in the cytoplasm. Its subcellular location is the cytosol. It carries out the reaction a carboxylic ester + H2O = an alcohol + a carboxylate + H(+). Its pathway is mycotoxin biosynthesis; patulin biosynthesis. Its function is as follows. Carboxylesterase; part of the gene cluster that mediates the biosynthesis of patulin, an acetate-derived tetraketide mycotoxin produced by several fungal species that shows antimicrobial properties against several bacteria. The function of patB in patulin synthesis has still to be characterized. The pathway begins with the synthesis of 6-methylsalicylic acid by the polyketide synthase (PKS) patK via condensation of acetate and malonate units. The 6-methylsalicylic acid decarboxylase patG then catalyzes the decarboxylation of 6-methylsalicylic acid to yield m-cresol (also known as 3-methylphenol). These first reactions occur in the cytosol. The intermediate m-cresol is then transported into the endoplasmic reticulum where the cytochrome P450 monooxygenase patH converts it to m-hydroxybenzyl alcohol, which is further converted to gentisyl alcohol by the cytochrome P450 monooxygenase patI. The oxidoreductases patJ and patO further convert gentisyl alcohol to isoepoxydon in the vacuole. PatN catalyzes then the transformation of isoepoxydon into phyllostine. The cluster protein patF is responsible for the conversion from phyllostine to neopatulin whereas the alcohol dehydrogenase patD converts neopatulin to E-ascladiol. The steps between isoepoxydon and E-ascladiol occur in the cytosol, and E-ascladiol is probably secreted to the extracellular space by one of the cluster-specific transporters patC or patM. Finally, the secreted patulin synthase patE catalyzes the conversion of E-ascladiol to patulin. The polypeptide is Carboxylesterase patB (Penicillium expansum (Blue mold rot fungus)).